The following is a 270-amino-acid chain: NADPH-dependent 7-cyano-7-deazaguanine reductase (270 aa).

79–81 (IES) contributes to the substrate binding site. Residue 81-82 (SK) participates in NADPH binding. The active-site Thioimide intermediate is the Cys177. Residue Asp184 is the Proton donor of the active site. 216-217 (HE) lines the substrate pocket. 245–246 (RG) lines the NADPH pocket.

It belongs to the GTP cyclohydrolase I family. QueF type 2 subfamily. Homodimer.

Its subcellular location is the cytoplasm. The catalysed reaction is 7-aminomethyl-7-carbaguanine + 2 NADP(+) = 7-cyano-7-deazaguanine + 2 NADPH + 3 H(+). It functions in the pathway tRNA modification; tRNA-queuosine biosynthesis. Catalyzes the NADPH-dependent reduction of 7-cyano-7-deazaguanine (preQ0) to 7-aminomethyl-7-deazaguanine (preQ1). The chain is NADPH-dependent 7-cyano-7-deazaguanine reductase from Acinetobacter baumannii (strain SDF).